The chain runs to 321 residues: MAEAEAGGDEVRCVRLSAERAKLLLAEVDTLLFDCDGVLWRGETAVPGAPETLRALRARGKRLGFITNNSSKTRTAYAEKLRRLGFGGPMGPEAGLEVFGTAYCSALYLRQRLAGVPDPKAYVLGSPALAAELEAVGVTSVGVGPDVLHGDGPSDWLAVPLEPDVRAVVVGFDPHFSYMKLTKAVRYLQQPDCLLVGTNMDNRLPLENGRFIAGTGCLVRAVEMAAQRQADIIGKPSRFIFDCVSQEYGINPERTVMVGDRLDTDILLGSTCSLKTILTLTGVSSLEDVKSNQESDCMFKKKMVPDFYVDSIADLLPALQG.

D34 functions as the Nucleophile in the catalytic mechanism. The Mg(2+) site is built by D34, D36, and D260. The Proton donor role is filled by D36.

It belongs to the HAD-like hydrolase superfamily. CbbY/CbbZ/Gph/YieH family. Homodimer. It depends on Mg(2+) as a cofactor. As to expression, expression was confirmed in liver, adipose tissue, testis and pancreatic islet.

The enzyme catalyses O-phospho-L-tyrosyl-[protein] + H2O = L-tyrosyl-[protein] + phosphate. It catalyses the reaction sn-glycerol 1-phosphate + H2O = glycerol + phosphate. The catalysed reaction is sn-glycerol 3-phosphate + H2O = glycerol + phosphate. Its function is as follows. Glycerol-3-phosphate phosphatase hydrolyzing glycerol-3-phosphate into glycerol. Thereby, regulates the cellular levels of glycerol-3-phosphate a metabolic intermediate of glucose, lipid and energy metabolism. Was also shown to have a 2-phosphoglycolate phosphatase activity and a tyrosine-protein phosphatase activity. However, their physiological relevance is unclear. In vitro, also has a phosphatase activity toward ADP, ATP, GDP and GTP. The polypeptide is Glycerol-3-phosphate phosphatase (Rattus norvegicus (Rat)).